A 365-amino-acid chain; its full sequence is MGMPLPWALSLLLVLLPQTWGSETRPPLMYHLTAVSNPSTGLPSFWATGWLGPQQYLTYNSLRQEADPCGAWMWENQVSWYWEKETTDLKSKEQLFLEALKTLEKILNGTYTLQGLLGCELASDNSSVPTAVFALNGEEFMKFNPRIGNWTGEWPETEIVANLWMKQPDAARKESEFLLNSCPERLLGHLERGRRNLEWKEPPSMRLKARPGNSGSSVLTCAAFSFYPPELKFRFLRNGLASGSGNCSTGPNGDGSFHAWSLLEVKRGDEHHYQCQVEHEGLAQPLTVDLDSSARSSVPVVGIVLGLLLVVVAIAGGVLLWGRMRSGLPAPWLSLSGDDSGDLLPGGNLPPEAEPQGANAFPATS.

The first 21 residues, 1 to 21 (MGMPLPWALSLLLVLLPQTWG), serve as a signal peptide directing secretion. Residues 22 to 110 (SETRPPLMYH…KTLEKILNGT (89 aa)) form an alpha-1 region. The Extracellular portion of the chain corresponds to 22–297 (SETRPPLMYH…VDLDSSARSS (276 aa)). N-linked (GlcNAc...) asparagine glycosylation is found at N108, N125, N149, and N246. Residues 111-200 (YTLQGLLGCE…ERGRRNLEWK (90 aa)) are alpha-2. Disulfide bonds link C119-C182 and C221-C275. Residues 201-290 (EPPSMRLKAR…GLAQPLTVDL (90 aa)) are alpha-3. An Ig-like C1-type domain is found at 202–289 (PPSMRLKARP…EGLAQPLTVD (88 aa)). Positions 291-297 (DSSARSS) are connecting peptide. The chain crosses the membrane as a helical span at residues 298–321 (VPVVGIVLGLLLVVVAIAGGVLLW). Residues 322–365 (GRMRSGLPAPWLSLSGDDSGDLLPGGNLPPEAEPQGANAFPATS) are Cytoplasmic-facing. S334 is modified (phosphoserine). Residues 343 to 365 (LLPGGNLPPEAEPQGANAFPATS) form a disordered region.

Belongs to the immunoglobulin superfamily. As to quaternary structure, fcRn complex consists of two subunits: p51, and p14 which is equivalent to beta-2-microglobulin. It forms an MHC class I-like heterodimer. Interacts with albumin/ALB; this interaction regulates ALB homeostasis. Intestinal epithelium of suckling rodents. Expressed in neonatal intestine and fetal yolk sac.

The protein resides in the cell membrane. It localises to the endosome membrane. Cell surface receptor that transfers passive humoral immunity from the mother to the newborn. Binds to the Fc region of monomeric immunoglobulin gamma and mediates its selective uptake from milk. IgG in the milk is bound at the apical surface of the intestinal epithelium. The resultant FcRn-IgG complexes are transcytosed across the intestinal epithelium and IgG is released from FcRn into blood or tissue fluids. Throughout life, contributes to effective humoral immunity by recycling IgG and extending its half-life in the circulation. Mechanistically, monomeric IgG binding to FcRn in acidic endosomes of endothelial and hematopoietic cells recycles IgG to the cell surface where it is released into the circulation. In addition of IgG, regulates homeostasis of the other most abundant circulating protein albumin/ALB. The protein is IgG receptor FcRn large subunit p51 (Fcgrt) of Mus musculus (Mouse).